A 273-amino-acid polypeptide reads, in one-letter code: tRNA (guanine-N(7)-)-methyltransferase A (273 aa).

G86, E109, R111, N142, A143, and L162 together coordinate S-adenosyl-L-methionine. The active site involves D165. The interval P166 to K174 is alphaC helix. S-adenosyl-L-methionine contacts are provided by T240 and E242. The alpha6 helix stretch occupies residues T240 to R248.

Belongs to the class I-like SAM-binding methyltransferase superfamily. TrmB family. In terms of assembly, catalytic component of the METTL1-WDR4 complex, composed of mettl1 and wdr4.

Its subcellular location is the nucleus. The enzyme catalyses guanosine(46) in tRNA + S-adenosyl-L-methionine = N(7)-methylguanosine(46) in tRNA + S-adenosyl-L-homocysteine. The catalysed reaction is a guanosine in mRNA + S-adenosyl-L-methionine = an N(7)-methylguanosine in mRNA + S-adenosyl-L-homocysteine. It catalyses the reaction a guanosine in miRNA + S-adenosyl-L-methionine = an N(7)-methylguanosine in miRNA + S-adenosyl-L-homocysteine. Its pathway is tRNA modification; N(7)-methylguanine-tRNA biosynthesis. Its function is as follows. Catalytic component of METTL1-WDR4 methyltransferase complex that mediates the formation of N(7)-methylguanine in a subset of RNA species, such as tRNAs, mRNAs and microRNAs (miRNAs). Catalyzes the formation of N(7)-methylguanine at position 46 (m7G46) in a large subset of tRNAs that contain the 5'-RAGGU-3' motif within the variable loop. M7G46 interacts with C13-G22 in the D-loop to stabilize tRNA tertiary structure and protect tRNAs from decay. Also acts as a methyltransferase for a subset of internal N(7)-methylguanine in mRNAs. Internal N(7)-methylguanine methylation of mRNAs in response to stress promotes their relocalization to stress granules, thereby suppressing their translation. Also methylates a specific subset of miRNAs. The protein is tRNA (guanine-N(7)-)-methyltransferase A (mettl1-A) of Xenopus tropicalis (Western clawed frog).